The chain runs to 249 residues: EID1-like F-box protein 2 (249 aa).

An F-box domain is found at 16 to 68 (HCTKGHLSEEVLFLMVQHLNWNPNVIATLSCVCKWFDDLAKRLLWKEFCRARA).

In Arabidopsis thaliana (Mouse-ear cress), this protein is EID1-like F-box protein 2 (EDL2).